The primary structure comprises 179 residues: ATP synthase subunit delta (179 aa).

Belongs to the ATPase delta chain family. As to quaternary structure, F-type ATPases have 2 components, F(1) - the catalytic core - and F(0) - the membrane proton channel. F(1) has five subunits: alpha(3), beta(3), gamma(1), delta(1), epsilon(1). F(0) has three main subunits: a(1), b(2) and c(10-14). The alpha and beta chains form an alternating ring which encloses part of the gamma chain. F(1) is attached to F(0) by a central stalk formed by the gamma and epsilon chains, while a peripheral stalk is formed by the delta and b chains.

It is found in the cell membrane. F(1)F(0) ATP synthase produces ATP from ADP in the presence of a proton or sodium gradient. F-type ATPases consist of two structural domains, F(1) containing the extramembraneous catalytic core and F(0) containing the membrane proton channel, linked together by a central stalk and a peripheral stalk. During catalysis, ATP synthesis in the catalytic domain of F(1) is coupled via a rotary mechanism of the central stalk subunits to proton translocation. In terms of biological role, this protein is part of the stalk that links CF(0) to CF(1). It either transmits conformational changes from CF(0) to CF(1) or is implicated in proton conduction. The polypeptide is ATP synthase subunit delta (Clostridium botulinum (strain Kyoto / Type A2)).